Consider the following 485-residue polypeptide: Bifunctional protein GlmU (485 aa).

The tract at residues 1–241 (MSASDFSSAV…ARELAGVNDR (241 aa)) is pyrophosphorylase. Residues 13–16 (LAAG), K27, Q84, and 89–90 (GT) each bind UDP-N-acetyl-alpha-D-glucosamine. A Mg(2+)-binding site is contributed by D114. UDP-N-acetyl-alpha-D-glucosamine contacts are provided by G151, E166, N181, and N239. Position 239 (N239) interacts with Mg(2+). The linker stretch occupies residues 242–262 (VQLAEAGAELNRRTVIAAMRG). The tract at residues 263-485 (GATIVDPATT…AAQNVHNQEG (223 aa)) is N-acetyltransferase. Residues R344 and K362 each coordinate UDP-N-acetyl-alpha-D-glucosamine. H374 serves as the catalytic Proton acceptor. UDP-N-acetyl-alpha-D-glucosamine-binding residues include Y377 and N388. Residues A391, 397 to 398 (NY), S416, and A434 contribute to the acetyl-CoA site. Residues 465 to 485 (RPGTAAAQAAEAAQNVHNQEG) are disordered. Residues 469 to 478 (AAAQAAEAAQ) show a composition bias toward low complexity.

The protein in the N-terminal section; belongs to the N-acetylglucosamine-1-phosphate uridyltransferase family. This sequence in the C-terminal section; belongs to the transferase hexapeptide repeat family. As to quaternary structure, homotrimer. Mg(2+) serves as cofactor.

The protein resides in the cytoplasm. The catalysed reaction is alpha-D-glucosamine 1-phosphate + acetyl-CoA = N-acetyl-alpha-D-glucosamine 1-phosphate + CoA + H(+). It carries out the reaction N-acetyl-alpha-D-glucosamine 1-phosphate + UTP + H(+) = UDP-N-acetyl-alpha-D-glucosamine + diphosphate. The protein operates within nucleotide-sugar biosynthesis; UDP-N-acetyl-alpha-D-glucosamine biosynthesis; N-acetyl-alpha-D-glucosamine 1-phosphate from alpha-D-glucosamine 6-phosphate (route II): step 2/2. It functions in the pathway nucleotide-sugar biosynthesis; UDP-N-acetyl-alpha-D-glucosamine biosynthesis; UDP-N-acetyl-alpha-D-glucosamine from N-acetyl-alpha-D-glucosamine 1-phosphate: step 1/1. Its pathway is bacterial outer membrane biogenesis; LPS lipid A biosynthesis. Its function is as follows. Catalyzes the last two sequential reactions in the de novo biosynthetic pathway for UDP-N-acetylglucosamine (UDP-GlcNAc). The C-terminal domain catalyzes the transfer of acetyl group from acetyl coenzyme A to glucosamine-1-phosphate (GlcN-1-P) to produce N-acetylglucosamine-1-phosphate (GlcNAc-1-P), which is converted into UDP-GlcNAc by the transfer of uridine 5-monophosphate (from uridine 5-triphosphate), a reaction catalyzed by the N-terminal domain. The protein is Bifunctional protein GlmU of Corynebacterium glutamicum (strain R).